A 201-amino-acid chain; its full sequence is MITSIATTTAGAFEVKSLGFIPYPSQPKRIFFMAQVIFRILAIAFAVASISAMVTSDQNVIVFGMDTAARYSYSSAFRFLVGANAVVCGFSVLSLIFVCLMSRRSEAILEKNYYLFLHDMVMMVMMVSGCSAATAIGYVGRYGEKEITWTAVCDFVGKFCNQALVSIVLAYLALFCYVALTTLAAHKLNHSSSTAAIRQNE.

Over 1 to 29 (MITSIATTTAGAFEVKSLGFIPYPSQPKR) the chain is Cytoplasmic. The helical transmembrane segment at 30–50 (IFFMAQVIFRILAIAFAVASI) threads the bilayer. Topologically, residues 51 to 78 (SAMVTSDQNVIVFGMDTAARYSYSSAFR) are extracellular. A helical membrane pass occupies residues 79 to 99 (FLVGANAVVCGFSVLSLIFVC). Over 100–119 (LMSRRSEAILEKNYYLFLHD) the chain is Cytoplasmic. Residues 120–140 (MVMMVMMVSGCSAATAIGYVG) form a helical membrane-spanning segment. Over 141–162 (RYGEKEITWTAVCDFVGKFCNQ) the chain is Extracellular. The chain crosses the membrane as a helical span at residues 163-183 (ALVSIVLAYLALFCYVALTTL). Residues 184–201 (AAHKLNHSSSTAAIRQNE) are Cytoplasmic-facing.

Belongs to the Casparian strip membrane proteins (CASP) family. Homodimer and heterodimers.

It localises to the cell membrane. This chain is CASP-like protein 1F2, found in Ricinus communis (Castor bean).